Here is a 106-residue protein sequence, read N- to C-terminus: Stress-responsive protein 1 (106 aa).

Its subcellular location is the mitochondrion. Stress-responsive protein that may play a role in regulation of cell cycle. This chain is Stress-responsive protein 1 (sro1), found in Schizosaccharomyces pombe (strain 972 / ATCC 24843) (Fission yeast).